Here is a 444-residue protein sequence, read N- to C-terminus: Probable glycine dehydrogenase (decarboxylating) subunit 1 (444 aa).

The protein belongs to the GcvP family. N-terminal subunit subfamily. As to quaternary structure, the glycine cleavage system is composed of four proteins: P, T, L and H. In this organism, the P 'protein' is a heterodimer of two subunits.

It catalyses the reaction N(6)-[(R)-lipoyl]-L-lysyl-[glycine-cleavage complex H protein] + glycine + H(+) = N(6)-[(R)-S(8)-aminomethyldihydrolipoyl]-L-lysyl-[glycine-cleavage complex H protein] + CO2. In terms of biological role, the glycine cleavage system catalyzes the degradation of glycine. The P protein binds the alpha-amino group of glycine through its pyridoxal phosphate cofactor; CO(2) is released and the remaining methylamine moiety is then transferred to the lipoamide cofactor of the H protein. In Chlorobium phaeobacteroides (strain DSM 266 / SMG 266 / 2430), this protein is Probable glycine dehydrogenase (decarboxylating) subunit 1.